A 250-amino-acid polypeptide reads, in one-letter code: Ditrans,polycis-undecaprenyl-diphosphate synthase ((2E,6E)-farnesyl-diphosphate specific) (250 aa).

Asp27 is a catalytic residue. Asp27 is a Mg(2+) binding site. Substrate-binding positions include 28–31 (GNGR), Trp32, Arg40, His44, and 72–74 (SSE). Catalysis depends on Asn75, which acts as the Proton acceptor. Substrate-binding residues include Trp76, Arg78, and Arg195. A Mg(2+)-binding site is contributed by His200. 201-203 (RIS) contacts substrate. Glu214 contacts Mg(2+).

This sequence belongs to the UPP synthase family. Homodimer. The cofactor is Mg(2+).

The catalysed reaction is 8 isopentenyl diphosphate + (2E,6E)-farnesyl diphosphate = di-trans,octa-cis-undecaprenyl diphosphate + 8 diphosphate. Its function is as follows. Catalyzes the sequential condensation of isopentenyl diphosphate (IPP) with (2E,6E)-farnesyl diphosphate (E,E-FPP) to yield (2Z,6Z,10Z,14Z,18Z,22Z,26Z,30Z,34E,38E)-undecaprenyl diphosphate (di-trans,octa-cis-UPP). UPP is the precursor of glycosyl carrier lipid in the biosynthesis of bacterial cell wall polysaccharide components such as peptidoglycan and lipopolysaccharide. This is Ditrans,polycis-undecaprenyl-diphosphate synthase ((2E,6E)-farnesyl-diphosphate specific) from Blochmanniella floridana.